The chain runs to 317 residues: Nucleosome assembly protein 1;4 (317 aa).

A Nuclear export signal motif is present at residues 52–67 (LSPKVTKRVLFLKDIQ). A Nuclear localization signal motif is present at residues 214–219 (KKKTKK). Positions 297 to 317 (ALVDEDDSDDNDDDDNDEKSD) are disordered. Acidic residues predominate over residues 298 to 317 (LVDEDDSDDNDDDDNDEKSD).

This sequence belongs to the nucleosome assembly protein (NAP) family. Can form homomeric and heteromeric protein complexes with NAP1;1, NAP1;2 and NAP1;3. Binds histone H2A. Expressed in the root segment covering the apical end of the differentiation zone, the elongation zone of the root and the mature pollen within the anthers of open flowers.

Its subcellular location is the nucleus. The protein resides in the cytoplasm. Its function is as follows. May modulate chromatin structure by regulation of nucleosome assembly/disassembly. This chain is Nucleosome assembly protein 1;4 (NAP1;4), found in Arabidopsis thaliana (Mouse-ear cress).